The chain runs to 1091 residues: AP-3 complex subunit beta-1 (1091 aa).

2 disordered regions span residues 1–32 (MSGN…SPSG) and 267–290 (EDNE…KKKP). A compositionally biased stretch (basic and acidic residues) spans 267–288 (EDNEKNFYESDDEQKEKTDQKK). Phosphoserine occurs at positions 276 and 609. Residues 664–807 (AGKAKKENPA…EKEKKTKEDR (144 aa)) form a disordered region. Residues 667–678 (AKKENPARKFYS) show a composition bias toward basic and acidic residues. Composition is skewed to acidic residues over residues 679–695 (DSEE…DSES) and 703–718 (EQDE…SEDS). Residues 719 to 736 (SSEHRSDSESVSEVGDKR) are compositionally biased toward basic and acidic residues. A phosphoserine mark is found at serine 748 and serine 750. Residues 763-775 (SDSSSTDSSSVEE) show a composition bias toward low complexity. A compositionally biased stretch (acidic residues) spans 776–789 (SSSDSESESESESE). The span at 790–807 (SESKKVTMEKEKKTKEDR) shows a compositional bias: basic and acidic residues.

Belongs to the adaptor complexes large subunit family. As to quaternary structure, adaptor protein complex 3 (AP-3) is a heterotetramer composed of two large adaptins (delta-type subunit AP3D1 and beta-type subunit AP3B1 or AP3B2), a medium adaptin (mu-type subunit AP3M1 or AP3M2) and a small adaptin (sigma-type subunit APS1 or AP3S2). AP-3 associates with the BLOC-1 complex. Interacts with KIF3A; interaction is direct; interaction is impaired by pyrophosphorylation of AP3B1. In terms of processing, phosphorylated on serine residues. Post-translationally, pyrophosphorylation by 5-diphosphoinositol pentakisphosphate (5-IP7) impairs interaction with KIF3A. Serine pyrophosphorylation is achieved by Mg(2+)-dependent, but enzyme independent transfer of a beta-phosphate from a inositol pyrophosphate to a pre-phosphorylated serine residue.

Its subcellular location is the cytoplasmic vesicle. It localises to the clathrin-coated vesicle membrane. It is found in the golgi apparatus. Functionally, subunit of non-clathrin- and clathrin-associated adaptor protein complex 3 (AP-3) that plays a role in protein sorting in the late-Golgi/trans-Golgi network (TGN) and/or endosomes. The AP complexes mediate both the recruitment of clathrin to membranes and the recognition of sorting signals within the cytosolic tails of transmembrane cargo molecules. AP-3 appears to be involved in the sorting of a subset of transmembrane proteins targeted to lysosomes and lysosome-related organelles. In concert with the BLOC-1 complex, AP-3 is required to target cargos into vesicles assembled at cell bodies for delivery into neurites and nerve terminals. In Canis lupus familiaris (Dog), this protein is AP-3 complex subunit beta-1 (AP3B1).